The primary structure comprises 255 residues: Acetylglutamate kinase (255 aa).

Residues 40–41, Arg62, and Asn153 contribute to the substrate site; that span reads GG.

It belongs to the acetylglutamate kinase family. ArgB subfamily.

It is found in the cytoplasm. It carries out the reaction N-acetyl-L-glutamate + ATP = N-acetyl-L-glutamyl 5-phosphate + ADP. The protein operates within amino-acid biosynthesis; L-arginine biosynthesis; N(2)-acetyl-L-ornithine from L-glutamate: step 2/4. Its function is as follows. Catalyzes the ATP-dependent phosphorylation of N-acetyl-L-glutamate. The sequence is that of Acetylglutamate kinase from Bacillus thuringiensis subsp. konkukian (strain 97-27).